A 104-amino-acid chain; its full sequence is Protein MGF 110-2L (104 aa).

The N-terminal stretch at 1-31 (MRFFSYLGLLLAGLTSLQGFSTDNLLEEELR) is a signal peptide.

The protein belongs to the asfivirus MGF 110 family.

In terms of biological role, plays a role in virus cell tropism, and may be required for efficient virus replication in macrophages. This chain is Protein MGF 110-2L, found in African swine fever virus (isolate Pig/Portugal/OURT88/1988) (ASFV).